Consider the following 70-residue polypeptide: ATP synthase subunit c (70 aa).

2 helical membrane-spanning segments follow: residues 4–24 (IAAAIAIGLGALGAGIGNGLI) and 45–65 (LMFIGVALVEALPIIAVVIAF).

Belongs to the ATPase C chain family. As to quaternary structure, F-type ATPases have 2 components, F(1) - the catalytic core - and F(0) - the membrane proton channel. F(1) has five subunits: alpha(3), beta(3), gamma(1), delta(1), epsilon(1). F(0) has three main subunits: a(1), b(2) and c(10-14). The alpha and beta chains form an alternating ring which encloses part of the gamma chain. F(1) is attached to F(0) by a central stalk formed by the gamma and epsilon chains, while a peripheral stalk is formed by the delta and b chains.

The protein localises to the cell membrane. In terms of biological role, f(1)F(0) ATP synthase produces ATP from ADP in the presence of a proton or sodium gradient. F-type ATPases consist of two structural domains, F(1) containing the extramembraneous catalytic core and F(0) containing the membrane proton channel, linked together by a central stalk and a peripheral stalk. During catalysis, ATP synthesis in the catalytic domain of F(1) is coupled via a rotary mechanism of the central stalk subunits to proton translocation. This chain is ATP synthase subunit c, found in Bacillus pumilus (strain SAFR-032).